The following is a 1129-amino-acid chain: SMC5-SMC6 complex localization factor protein 2 (1129 aa).

Disordered stretches follow at residues 71 to 178 (VKAR…SILN), 312 to 343 (NTSS…TEQA), and 955 to 1057 (MLYD…QLEG). Basic residues predominate over residues 72 to 87 (KARRHTLPHSSHRRSP). A compositionally biased stretch (polar residues) spans 93–110 (LLFQQRPRNSSGQFTHNP). Basic and acidic residues-rich tracts occupy residues 112–130 (QKKD…KKEL) and 149–166 (RKSE…RPRV). Composition is skewed to polar residues over residues 169 to 178 (QATSSSSILN) and 324 to 343 (TGRS…TEQA). Acidic residues-rich tracts occupy residues 999 to 1014 (ESEE…EEDW) and 1033 to 1048 (SAED…EEES).

The protein belongs to the FAM178 family.

It is found in the nucleus. Plays a role in the DNA damage response (DDR) pathway by regulating postreplication repair of UV-damaged DNA and genomic stability maintenance. Promotes the recruitment of the SMC5-SMC6 complex to DNA lesions. This Danio rerio (Zebrafish) protein is SMC5-SMC6 complex localization factor protein 2 (slf2).